Here is a 303-residue protein sequence, read N- to C-terminus: Probable cell division protein WhiA (303 aa).

A DNA-binding region (H-T-H motif) is located at residues 272–303 (SIQQIADSIEPPLTKSGVNHRLRKINKIADDL).

Belongs to the WhiA family.

In terms of biological role, involved in cell division and chromosome segregation. The sequence is that of Probable cell division protein WhiA from Streptococcus thermophilus (strain ATCC BAA-250 / LMG 18311).